The sequence spans 424 residues: Serine--tRNA ligase (424 aa).

231 to 233 (TAE) is an L-serine binding site. 262–264 (RSE) is an ATP binding site. Position 285 (Glu-285) interacts with L-serine. ATP is bound at residue 349 to 352 (EISS). Ser-385 is an L-serine binding site.

The protein belongs to the class-II aminoacyl-tRNA synthetase family. Type-1 seryl-tRNA synthetase subfamily. In terms of assembly, homodimer. The tRNA molecule binds across the dimer.

The protein localises to the cytoplasm. It catalyses the reaction tRNA(Ser) + L-serine + ATP = L-seryl-tRNA(Ser) + AMP + diphosphate + H(+). It carries out the reaction tRNA(Sec) + L-serine + ATP = L-seryl-tRNA(Sec) + AMP + diphosphate + H(+). The protein operates within aminoacyl-tRNA biosynthesis; selenocysteinyl-tRNA(Sec) biosynthesis; L-seryl-tRNA(Sec) from L-serine and tRNA(Sec): step 1/1. Its function is as follows. Catalyzes the attachment of serine to tRNA(Ser). Is also able to aminoacylate tRNA(Sec) with serine, to form the misacylated tRNA L-seryl-tRNA(Sec), which will be further converted into selenocysteinyl-tRNA(Sec). The polypeptide is Serine--tRNA ligase (Bacillus cereus (strain AH187)).